The following is a 206-amino-acid chain: UPF0301 protein Msil_1255 (206 aa).

This sequence belongs to the UPF0301 (AlgH) family.

The chain is UPF0301 protein Msil_1255 from Methylocella silvestris (strain DSM 15510 / CIP 108128 / LMG 27833 / NCIMB 13906 / BL2).